Reading from the N-terminus, the 61-residue chain is Large ribosomal subunit protein eL24 (61 aa).

Zn(2+) is bound by residues Cys7, Cys10, Cys33, and Cys37. The segment at Cys7 to Cys37 adopts a C4-type zinc-finger fold.

Belongs to the eukaryotic ribosomal protein eL24 family. In terms of assembly, part of the 50S ribosomal subunit. Forms a cluster with proteins L3 and L14. Zn(2+) is required as a cofactor.

Functionally, binds to the 23S rRNA. This Hyperthermus butylicus (strain DSM 5456 / JCM 9403 / PLM1-5) protein is Large ribosomal subunit protein eL24.